We begin with the raw amino-acid sequence, 91 residues long: Acyl carrier protein (91 aa).

The Carrier domain occupies Glu-6 to Glu-81. Residue Ser-41 is modified to O-(pantetheine 4'-phosphoryl)serine.

The protein belongs to the acyl carrier protein (ACP) family. Post-translationally, 4'-phosphopantetheine is transferred from CoA to a specific serine of apo-ACP by AcpS. This modification is essential for activity because fatty acids are bound in thioester linkage to the sulfhydryl of the prosthetic group.

Its subcellular location is the cytoplasm. Its pathway is lipid metabolism; fatty acid biosynthesis. Its function is as follows. Carrier of the growing fatty acid chain in fatty acid biosynthesis. The sequence is that of Acyl carrier protein from Rhodococcus erythropolis (strain PR4 / NBRC 100887).